The following is a 1034-amino-acid chain: MASVFMCGVEDLLFSGSRFVWNLTVSTLRRWYTERLRACHQVLRTWCGLQDVYQMTEGRHCQVHLLDDRRLELLVQPKLLARELLDLVASHFNLKEKEYFGITFIDDTGQQNWLQLDHRVLDHDLPKKPGPTILHFAVRFYIESISFLKDKTTVELFFLNAKACVHKGQIEVESETIFKLAAFILQEAKGDYTSDENARKDLKTLPAFPTKTLQEHPSLAYCEDRVIEHYLKIKGLTRGQAVVQYMKIVEALPTYGVHYYAVKDKQGLPWWLGISYKGIGQYDIQDKVKPRKLFQWKQLENLYFREKKFAVEVHDPRRISVSRRTFGQSGLFVQTWYANSSLIKSIWVMAISQHQFYLDRKQSKAKIPSARSLDEIAMDLTETGTQRASKLVTLETKSQFIMASNGSLISSGSQDSEVSEEQKREKILELKKKEKLLQEKLLKKVEELKKICLREAELTGKMPKEYPLNIGEKPPQVRRRVGTAFKLDDNLLPSEEDPALQELESNFLIQQKLVEAAKKLANEPDLCKTVKKKRKQDYTDAMKKLQEIENAINEYRIRCGKKPSQKATVLPEDIIPSESSSLSDTTTYDDPSDAFTFPGQRSSSVPHSPRILPPKSLGIERIHFRKSSINEQFVDTRQSREMLSTHSSPYKTLERRPQGGRSMPTTPVLTRNAYSSSHLEPESSSQHCRQRSGSLESQSHLLSEMDSDKPFFSLSKSQRSSSTEILDDGSSYTSQSSTEYYCVTPVTGPYYTTQTLDTRTRGRRRSKKQNVSTSNSGSMPNLAQKDSLRNGVYSKSQEPPSSSYYIAGYTPYAECDFYYSGGYVYENDTEGQYSVNPSYRSSAHYGYERQRDYSRSFHEDEVDRVPHNPYATLRLPRKAAAKSEHITKNIHKALVAEHLRGWYQRASGQKDQGHSPQTSFDSDRGSQRCLGFAGLQVPCSPSSRASSYSSVSSTNASGNWRTQLTIGLSDYETPAHSSYTSCYGNVYNPLPSPSRQYTEISQLDGTDGNQLEDNLESSEQRLFWHEDSKPGTLV.

The FERM domain maps to 59 to 361 (RHCQVHLLDD…SQHQFYLDRK (303 aa)). Serine 372 carries the post-translational modification Phosphoserine. Coiled coils occupy residues 417–450 (EVSE…ELKK) and 531–561 (KKKR…RCGK). The segment at 542–971 (MKKLQEIENA…TQLTIGLSDY (430 aa)) is necessary for adherens junction and tight junction localization. A compositionally biased stretch (low complexity) spans 576-589 (PSESSSLSDTTTYD). 4 disordered regions span residues 576 to 614 (PSES…ILPP), 635 to 698 (DTRQ…LESQ), 712 to 735 (FSLS…YTSQ), and 752 to 786 (TTQT…AQKD). Residue serine 608 is modified to Phosphoserine. Composition is skewed to polar residues over residues 635–650 (DTRQ…SSPY) and 663–674 (MPTTPVLTRNAY). Residues 675–685 (SSSHLEPESSS) show a composition bias toward low complexity. A Phosphoserine modification is found at serine 697. Over residues 713–722 (SLSKSQRSSS) the composition is skewed to low complexity. A compositionally biased stretch (polar residues) spans 769–781 (QNVSTSNSGSMPN). A Glycyl lysine isopeptide (Lys-Gly) (interchain with G-Cter in SUMO2) cross-link involves residue lysine 882. Disordered regions lie at residues 905-925 (RASG…SDRG) and 1004-1034 (DGTD…GTLV). Residues 906–920 (ASGQKDQGHSPQTSF) are compositionally biased toward polar residues. Serine 915 is subject to Phosphoserine. Positions 1018-1034 (SEQRLFWHEDSKPGTLV) are enriched in basic and acidic residues. A Glycyl lysine isopeptide (Lys-Gly) (interchain with G-Cter in SUMO2) cross-link involves residue lysine 1029.

As to quaternary structure, interacts with CYTH3. Interacts with PARD3. Interacts with CYTH1.

The protein resides in the cytoplasm. It localises to the cytoskeleton. The protein localises to the cell junction. Its subcellular location is the tight junction. It is found in the adherens junction. Functionally, member of GRP1 signaling complexes that are acutely recruited to plasma membrane ruffles in response to insulin receptor signaling. May function as a scaffolding protein that regulates epithelial cell polarity by connecting ARF6 activation with the PAR3 complex. Plays a redundant role with FRMD4A in epithelial polarization. This is FERM domain-containing protein 4B from Homo sapiens (Human).